The primary structure comprises 150 residues: Galactose-binding lectin (150 aa).

D-galactose contacts are provided by histidine 16 and glycine 19. Residue asparagine 26 is glycosylated (N-linked (GlcNAc...) asparagine). D-galactose is bound by residues asparagine 27, aspartate 35–histidine 37, histidine 64, and glycine 67. Asparagine 74 carries an N-linked (GlcNAc...) asparagine glycan. Residues glutamate 75, aspartate 83 to histidine 85, histidine 108, and glycine 111 each bind D-galactose. N-linked (GlcNAc...) asparagine glycosylation is present at asparagine 118. Residues asparagine 119 and aspartate 127–histidine 129 each bind D-galactose.

As to quaternary structure, monomer in solution. Homodimer in solution. Exists as a monomer in solution when a low concentration (0.001 mg/ml) of it is present. Homodimers start to appear at a concentration of 0.01 mg/ml and tetramers at a concentration of 0.1 mg/ml. As to expression, highly expressed in mantle and to a lesser extent in muscle, hepatopancreas, gill and hemocytes.

Bacterial binding activity is inhibited by D-galactose. Hemagglutinating activity is independent of divalent cations Ca2(+) or Mg2(+). It is strongly inhibited by N-acetyl-D-galactosamine (GalNAc), D-galactose and D-talose, and to a lesser extent by melibiose and raffinose. Also inhibited by glycoprotein asialo-bovine submaxillary mucin (BSM). Not inhibited by D-glucose, D-fucose, D-galactitol, N-acetyl-D-glucosamine or lactose. Fungal binding activity is inhibited by D-galactose. Cytotoxic activity against Raji cell line is completely inhibited by galactose, melibiose and raffinose, but not by glucose or lactose. Galactose inhibits binding to laminin and BSM, but not to collagen, gelatin or fibronectin. Its function is as follows. Galactose-binding lectin. Binds both alpha and beta anomer of galactose (Gal), but has a stronger interaction with the glycans having alpha Gal at the non-reducing end and binds beta Gal weakly only in highly branched glycans. Has high affinity to Galalpha1-4Galbeta1-4GlcNAc. Binds N-acetyl-2-deoxy-2-amino-galactose (2-deoxy-GalNAc). Binds N-acetylgalactosamine (GalNAc). Binds porcine stomach mucin (PSM) with high affinity. Binds galactosamine. Binds laminin, bovine submaxillary mucin (BSM), fibronectin, type I collagen and gelatin with a decreasing affinity, respectively. Has hemagglutinating activity towards human type A erythrocytes. Also hemagglutinates human type 0, B and AB erythrocytes as well as rabbit and mouse erythrocytes. Agglutinates both Gram-positive and Gram-negative bacteria including B.subtilis ATCC 6633, S.aureus ATCC 21027 and E.coli 3254, respectively. No agglutination activity towards Gram-positive S.amurskyense CMM 3673. Has bacteriostatic activity on S.amurskyense CMM 3673, B.subtilis ATCC 6633, S.aureus ATCC 21027 and E.coli 3254. However, has no agglutination nor bacteriostatic activity on Gram-negative C.scophthalmum CIP 104199 or A.troitsensis KMM 3674. Inhibits growth of fungi from the genera Aspergillus, Penicillium, Trichoderma and st. Mycelia. Inhibits germination of spores and hyphal growth of them. Has dose-dependent cytotoxic effect on the human globotriaosylceramide (Gb3)-expressing Burkitt's lymphoma (Raji) cell line. Binds to Gb3 in these cells leading to activation of caspase-9/3 and PARP. Has dose-dependent cytotoxic effect on the Gb3-expressing human MCF-7 breast cancer cell line. No cytotoxic effect on myelogenous leukemia K562 cell line, which does not express Gb3. Activates immune responses in mice and increases cytokine production of TNF-alpha, IL-6 and MCP-1 in the serum and the peritoneal lavage of mice. Induces TNF-alpha and IL-6 secretion in mouse RAW264.7 macrophages, mouse bone marrow-derived macrophages, human THP-1 macrophages, human peripheral blood mononuclear cells (PBMCs) and human blood monocyte-derived macrophages. TNF-alpha production in macrophages could not be inhibited by GalNAc, GalN or Gal, indicating that induced cytokine production is separate from its sugar binding activity. Increases intracellular reactive oxygen species levels, expression and phosphorylation of protein kinases PKC alpha/delta, expression of COX-2 and NF-kappaB, and activates the MAPK pathway by increasing the phosphorylation of ERK1/2, JNK1/2 and p38 in mouse RAW264.7 macrophages. Induces endotoxin tolerance in lipopolysaccharide(LPS)-activated macrophages by down-regulating IRAK2 expression, reducing JNK1/2 phosphorylation and NF-kappaB activation. Can slightly increase the bactericidal activity of RAW264.7 macrophages. Has DNA-binding activity. Recognizes pathogen-associated molecular patterns (PAMPs) and binds to LPS from E.coli, but has only little binding to beta-1,3-glucan from E.gracilis and peptidoglycan from S.aureus. Activates secretion of TNF-alpha and IFN-gamma by the human peripheral blood cells (HPBCs). May be involved in innate immunity acting as an antibacterial and antifungal agent involved in the recognition and clearance of pathogens. The protein is Galactose-binding lectin of Crenomytilus grayanus (Gray mussel).